We begin with the raw amino-acid sequence, 119 residues long: Protein GSKIP homolog (119 aa).

The protein belongs to the GSKIP family.

The sequence is that of Protein GSKIP homolog from Drosophila melanogaster (Fruit fly).